The chain runs to 802 residues: Putative transcriptional regulator cudA (802 aa).

Disordered stretches follow at residues 1–148, 154–173, 381–446, and 636–658; these read MNQS…PSAI, ISNN…NLLL, NNIN…NNEN, and QPQQ…QQGQ. Low complexity predominate over residues 25–63; it reads NNNNNGNNGMMMNQQQMQQHVVPHLHHLQQQQQQPQQQQ. Residues 69–88 show a composition bias toward polar residues; that stretch reads DYSNSPNGTTNGSTMSPNCI. The segment covering 89-128 has biased composition (low complexity); it reads NTNNNNNNNNNNNNNSNNNNNNNNNASNNLTSNKSSSTNT. The segment covering 129–142 has biased composition (polar residues); that stretch reads PQIGQLQASPANLT. A compositionally biased stretch (low complexity) spans 381–445; it reads NNINNNNNIN…CNNNNNNNNE (65 aa).

As to expression, expressed in the prestalk cells that constitute the slug tip (pstA cells) and in prespore cells (at protein level). Not expressed in the band of prestalk cells that lies behind the slug tip (pstO cells). Highly expressed in pstO derived papilla cells during culmination.

The protein resides in the nucleus. Its subcellular location is the nucleoplasm. Essential for normal culmination. May function as a transcriptional regulator. The sequence is that of Putative transcriptional regulator cudA (cudA) from Dictyostelium discoideum (Social amoeba).